The chain runs to 97 residues: MKRKTLLLIATLVALPGVTYADSPFSSLQSAHEKNTILKDLRKMCTPKGALTDEAWEKKIMASEGNQQHIREAMIAIERNNQHNYWQALGKVECPEM.

This is an uncharacterized protein from Salmonella typhi.